A 291-amino-acid chain; its full sequence is Protein US2 (291 aa).

Position 2 is an N-acetylglycine; by host; partial (Gly2). Residues 251–270 (PEVPDEQPTSPGRGPQETDP) are disordered.

Belongs to the herpesviridae HHV-1 US2 protein family. As to quaternary structure, interacts with host KRT18.

Its subcellular location is the host cytoplasm. It localises to the host nucleus. This is Protein US2 from Homo sapiens (Human).